Here is a 256-residue protein sequence, read N- to C-terminus: H-2 class II histocompatibility antigen, A-B alpha chain (256 aa).

An N-terminal signal peptide occupies residues 1–23 (MPRSRALILGVLALTTMLSLCGG). An alpha-1 region spans residues 24 to 111 (EDDIEADHVG…KRSNSTPATN (88 aa)). Topologically, residues 24-218 (EDDIEADHVG…IPAPMSELTE (195 aa)) are extracellular. Residues 112–205 (EAPQATVFPK…GLEEPVLKHW (94 aa)) form an alpha-2 region. The Ig-like C1-type domain occupies 114–206 (PQATVFPKSP…LEEPVLKHWE (93 aa)). Cys134 and Cys190 are joined by a disulfide. Residue Asn145 is glycosylated (N-linked (GlcNAc...) asparagine). Residues 206–218 (EPEIPAPMSELTE) form a connecting peptide region. A helical transmembrane segment spans residues 219-244 (TVVCALGLSVGLVGIVVGTIFIIQGL). Residues 245–256 (RSGGTSRHPGPL) are Cytoplasmic-facing.

The protein belongs to the MHC class II family.

Its subcellular location is the membrane. The polypeptide is H-2 class II histocompatibility antigen, A-B alpha chain (H2-Aa) (Mus musculus (Mouse)).